The chain runs to 308 residues: Coenzyme PQQ synthesis protein B (308 aa).

The protein belongs to the PqqB family.

It participates in cofactor biosynthesis; pyrroloquinoline quinone biosynthesis. In terms of biological role, may be involved in the transport of PQQ or its precursor to the periplasm. The chain is Coenzyme PQQ synthesis protein B from Klebsiella pneumoniae (strain 342).